The following is an 89-amino-acid chain: Inner kinetochore subunit mhf2 (89 aa).

It belongs to the CENP-X/MHF2 family. In terms of assembly, the MHF histone-fold complex is a heterotetramer of 2 mhf1-mhf2 heterodimers. Component of the inner kinetochore constitutive centromere-associated network (CCAN) (also known as central kinetochore Sim4 complex in fission yeast), which is composed of at least cnl2, cnp3, cnp20, fta1, fta2, fta3, fta4, fta6, fta7, mal2, mhf1, mhf2, mis6, mis15, mis17, sim4 and wip1.

It is found in the nucleus. It localises to the cytoplasm. Its function is as follows. Component of a FANCM-MHF complex that promotes gene conversion at blocked replication forks, probably by reversal of the stalled fork. FANCM-MHF promotes non-crossover recombination. The chain is Inner kinetochore subunit mhf2 from Schizosaccharomyces pombe (strain 972 / ATCC 24843) (Fission yeast).